We begin with the raw amino-acid sequence, 310 residues long: Cysteine synthase (310 aa).

Position 44 is an N6-(pyridoxal phosphate)lysine (Lys44). Pyridoxal 5'-phosphate is bound by residues Asn74, 179-183 (GTGGT), and Ser267.

Belongs to the cysteine synthase/cystathionine beta-synthase family. It depends on pyridoxal 5'-phosphate as a cofactor.

The catalysed reaction is O-acetyl-L-serine + hydrogen sulfide = L-cysteine + acetate. Its pathway is amino-acid biosynthesis; L-cysteine biosynthesis; L-cysteine from L-serine: step 2/2. The protein is Cysteine synthase (cysK) of Neisseria meningitidis serogroup B (strain ATCC BAA-335 / MC58).